A 509-amino-acid polypeptide reads, in one-letter code: Maturase K (509 aa).

The protein belongs to the intron maturase 2 family. MatK subfamily.

The protein localises to the plastid. Its subcellular location is the chloroplast. In terms of biological role, usually encoded in the trnK tRNA gene intron. Probably assists in splicing its own and other chloroplast group II introns. The chain is Maturase K from Pereskia aculeata (Barbados gooseberry).